The chain runs to 248 residues: UPF0173 metal-dependent hydrolase Hlac_1347 (248 aa).

This sequence belongs to the UPF0173 family.

This Halorubrum lacusprofundi (strain ATCC 49239 / DSM 5036 / JCM 8891 / ACAM 34) protein is UPF0173 metal-dependent hydrolase Hlac_1347.